The following is an 889-amino-acid chain: DNA mismatch repair protein MutS (889 aa).

Over residues 1 to 17 (MPKTNSSAASTNANPSS) the composition is skewed to low complexity. The tract at residues 1 to 20 (MPKTNSSAASTNANPSSLQQ) is disordered. Residue 640 to 647 (GPNMGGKS) coordinates ATP.

This sequence belongs to the DNA mismatch repair MutS family.

Its function is as follows. This protein is involved in the repair of mismatches in DNA. It is possible that it carries out the mismatch recognition step. This protein has a weak ATPase activity. The polypeptide is DNA mismatch repair protein MutS (Pseudoalteromonas atlantica (strain T6c / ATCC BAA-1087)).